Reading from the N-terminus, the 128-residue chain is Iron-sulfur cluster insertion protein ErpA (128 aa).

Iron-sulfur cluster contacts are provided by Cys56, Cys120, and Cys122.

This sequence belongs to the HesB/IscA family. As to quaternary structure, homodimer. The cofactor is iron-sulfur cluster.

Functionally, required for insertion of 4Fe-4S clusters for at least IspG. The sequence is that of Iron-sulfur cluster insertion protein ErpA from Xanthomonas campestris pv. campestris (strain 8004).